Reading from the N-terminus, the 172-residue chain is MLPMITGFMNYGQQTLRAARYIGQGFMITLSHTNRLPVTIQYPYEKLITSERFRGRIHFEFDKCIACEVCVRVCPIDLPVVDWKLETNIRKKRLLNYSIDFGICIFCGNCVEYCPTNCLSMTEEYEFSTYDRHELNYNQIALGRLPMSVIDDYTVRTILNSPQTKNGVNPLI.

2 4Fe-4S ferredoxin-type domains span residues glycine 55–lysine 84 and leucine 95–glutamate 124. [4Fe-4S] cluster-binding residues include cysteine 64, cysteine 67, cysteine 70, cysteine 74, cysteine 104, cysteine 107, cysteine 110, and cysteine 114.

The protein belongs to the complex I 23 kDa subunit family. NDH is composed of at least 16 different subunits, 5 of which are encoded in the nucleus. The cofactor is [4Fe-4S] cluster.

The protein localises to the plastid. The protein resides in the chloroplast thylakoid membrane. The catalysed reaction is a plastoquinone + NADH + (n+1) H(+)(in) = a plastoquinol + NAD(+) + n H(+)(out). It catalyses the reaction a plastoquinone + NADPH + (n+1) H(+)(in) = a plastoquinol + NADP(+) + n H(+)(out). Its function is as follows. NDH shuttles electrons from NAD(P)H:plastoquinone, via FMN and iron-sulfur (Fe-S) centers, to quinones in the photosynthetic chain and possibly in a chloroplast respiratory chain. The immediate electron acceptor for the enzyme in this species is believed to be plastoquinone. Couples the redox reaction to proton translocation, and thus conserves the redox energy in a proton gradient. The polypeptide is NAD(P)H-quinone oxidoreductase subunit I, chloroplastic (Capsella bursa-pastoris (Shepherd's purse)).